Consider the following 355-residue polypeptide: Glycerol-1-phosphate dehydrogenase [NAD(P)+] (355 aa).

NAD(+) is bound by residues 101–105 and 123–126; these read GKSID and TAAS. Residue aspartate 128 coordinates substrate. Serine 132 provides a ligand contact to NAD(+). Substrate is bound at residue aspartate 175. Zn(2+)-binding residues include aspartate 175 and histidine 255. Residue histidine 259 coordinates substrate. Residue histidine 271 participates in Zn(2+) binding.

Belongs to the glycerol-1-phosphate dehydrogenase family. Homodimer. The cofactor is Zn(2+).

The protein localises to the cytoplasm. The catalysed reaction is sn-glycerol 1-phosphate + NAD(+) = dihydroxyacetone phosphate + NADH + H(+). The enzyme catalyses sn-glycerol 1-phosphate + NADP(+) = dihydroxyacetone phosphate + NADPH + H(+). It participates in membrane lipid metabolism; glycerophospholipid metabolism. Functionally, catalyzes the NAD(P)H-dependent reduction of dihydroxyacetonephosphate (DHAP or glycerone phosphate) to glycerol 1-phosphate (G1P). The G1P thus generated is used as the glycerophosphate backbone of phospholipids in the cellular membranes of Archaea. This is Glycerol-1-phosphate dehydrogenase [NAD(P)+] from Staphylothermus marinus (strain ATCC 43588 / DSM 3639 / JCM 9404 / F1).